Reading from the N-terminus, the 173-residue chain is HAM34 protein (173 aa).

Over residues 22–89 the composition is skewed to low complexity; that stretch reads AAPATTPDTA…ADGTQTATAP (68 aa). A disordered region spans residues 22 to 155; it reads AAPATTPDTA…ATDTTSGASH (134 aa). Residues 95-133 show a composition bias toward polar residues; the sequence is TEESSASGEMTPTVGTDTSDQVSDSTAAGPSTPEGSMTG. Low complexity predominate over residues 134–155; sequence TSTPKASDSSSSATDTTSGASH.

In terms of tissue distribution, germinating spores.

Could be a structural protein required for the infection process of B.lactucae. This is HAM34 protein (HAM34) from Bremia lactucae (Lettuce downy mildew).